The chain runs to 188 residues: Large ribosomal subunit protein uL5 (188 aa).

The protein belongs to the universal ribosomal protein uL5 family. As to quaternary structure, part of the 50S ribosomal subunit; contacts the 5S rRNA and probably tRNA. Forms a bridge to the 30S subunit in the 70S ribosome.

In terms of biological role, this is one of the proteins that bind and probably mediate the attachment of the 5S RNA into the large ribosomal subunit, where it forms part of the central protuberance. In the 70S ribosome it contacts protein S13 of the 30S subunit (bridge B1b), connecting the 2 subunits; this bridge is implicated in subunit movement. May contact the P site tRNA; the 5S rRNA and some of its associated proteins might help stabilize positioning of ribosome-bound tRNAs. This Pyrococcus horikoshii (strain ATCC 700860 / DSM 12428 / JCM 9974 / NBRC 100139 / OT-3) protein is Large ribosomal subunit protein uL5.